The primary structure comprises 250 residues: 5'-nucleotidase SurE (250 aa).

Residues Asp8, Asp9, Ser39, and Asn95 each contribute to the a divalent metal cation site.

It belongs to the SurE nucleotidase family. A divalent metal cation serves as cofactor.

It localises to the cytoplasm. The catalysed reaction is a ribonucleoside 5'-phosphate + H2O = a ribonucleoside + phosphate. In terms of biological role, nucleotidase that shows phosphatase activity on nucleoside 5'-monophosphates. This is 5'-nucleotidase SurE from Syntrophobacter fumaroxidans (strain DSM 10017 / MPOB).